Consider the following 197-residue polypeptide: uncharacterized protein (197 aa).

This is an uncharacterized protein from Acanthamoeba polyphaga (Amoeba).